A 435-amino-acid polypeptide reads, in one-letter code: Glutamine synthetase (435 aa).

Residues 12–94 form the GS beta-grasp domain; sequence KGVKYFMISY…VAADCIMDDA (83 aa). The GS catalytic domain maps to 100 to 435; the sequence is PRVVLKKLVA…EWEHQTTLDV (336 aa). 4 residues coordinate Mg(2+): Glu123, Glu125, Glu180, and Glu187. An L-glutamate-binding site is contributed by Gly232. His236 is a Mg(2+) binding site. Ser240 lines the ATP pocket. Residues Arg291 and Arg315 each coordinate L-glutamate. ATP contacts are provided by Arg315 and Arg320. Glu328 contacts Mg(2+). Residue Arg330 coordinates L-glutamate.

It belongs to the glutamine synthetase family. In terms of assembly, homooctamer. Mg(2+) serves as cofactor.

It catalyses the reaction L-glutamate + NH4(+) + ATP = L-glutamine + ADP + phosphate + H(+). With respect to regulation, inhibited by methionine sulfoximine, ADP and pyrophosphate, but not by various nitrogen-containing metabolites that inhibit other GS enzymes. Its function is as follows. Catalyzes the ATP-dependent biosynthesis of glutamine from glutamate and ammonia. This chain is Glutamine synthetase, found in Rhizobium meliloti (strain 1021) (Ensifer meliloti).